Here is a 319-residue protein sequence, read N- to C-terminus: tRNA pseudouridine synthase B (319 aa).

D47 acts as the Nucleophile in catalysis.

It belongs to the pseudouridine synthase TruB family. Type 1 subfamily.

The catalysed reaction is uridine(55) in tRNA = pseudouridine(55) in tRNA. Responsible for synthesis of pseudouridine from uracil-55 in the psi GC loop of transfer RNAs. The chain is tRNA pseudouridine synthase B from Pseudoalteromonas translucida (strain TAC 125).